Consider the following 500-residue polypeptide: Xylan O-acetyltransferase 2 (500 aa).

Residues 1 to 25 lie on the Cytoplasmic side of the membrane; the sequence is MGLPGRRNPLLSARRAAASLRRSRR. Residues 26–43 form a helical; Signal-anchor for type II membrane protein membrane-spanning segment; it reads LPVYVAAVFFVASVLLMF. Residues 44 to 500 are Lumenal-facing; it reads RDEILYLTTA…RPPAAAGHVA (457 aa). The tract at residues 84-116 is disordered; it reads PVLLGHGGKPEKHHSVTERHRPKVSAKRRPNKK. A compositionally biased stretch (basic and acidic residues) spans 91–102; it reads GKPEKHHSVTER. Over residues 103–116 the composition is skewed to basic residues; the sequence is HRPKVSAKRRPNKK. Disulfide bonds link C143–C194, C165–C231, C174–C472, and C388–C468. 2 N-linked (GlcNAc...) asparagine glycosylation sites follow: N144 and N154. Positions 218–220 match the GDS motif motif; the sequence is GDS. S220 functions as the Nucleophile in the catalytic mechanism. Residues N260 and N416 are each glycosylated (N-linked (GlcNAc...) asparagine). The active-site Proton donor is the D467. Residues 467–470 carry the DXXH motif motif; that stretch reads DCIH. The Proton acceptor role is filled by H470.

The protein belongs to the PC-esterase family. TBL subfamily. In terms of tissue distribution, expressed at low levels in roots and leaves.

It localises to the golgi apparatus membrane. In terms of biological role, xylan acetyltransferase required for 2-O- and 3-O-monoacetylation of xylosyl residues in xylan. Catalyzes the 2-O-acetylation of xylan, followed by nonenzymatic acetyl migration to the O-3 position, resulting in products that are monoacetylated at both O-2 and O-3 positions. This chain is Xylan O-acetyltransferase 2, found in Oryza sativa subsp. japonica (Rice).